The primary structure comprises 299 residues: Pentalenolactone F synthase (299 aa).

2 residues coordinate Fe cation: histidine 105 and aspartate 107. Residues threonine 133 and tryptophan 251 each coordinate 2-oxoglutarate. Residue histidine 266 coordinates Fe cation. 2-oxoglutarate is bound at residue arginine 277.

The protein belongs to the TfdA dioxygenase family. The cofactor is Fe(2+).

The enzyme catalyses pentalenolactone D + 2 2-oxoglutarate + 2 O2 = pentalenolactone F + 2 succinate + 2 CO2 + H2O. The protein operates within antibiotic biosynthesis; pentalenolactone biosynthesis. Activated by ascorbate. Its function is as follows. Catalyzes the Fe(2+) and alpha-ketoglutarate-dependent oxidation of pentalenolactone D to pentalenolactone F in the biosynthesis of pentalenolactone antibiotic. Also able to catalyze the oxidation of pentalenolactone D to pentalenolactone E. The protein is Pentalenolactone F synthase (pntD) of Streptomyces arenae.